Consider the following 170-residue polypeptide: Transmembrane protein 252 (170 aa).

Helical transmembrane passes span 8 to 28 (ILCALALLMGFLMVCLGAFFI) and 40 to 60 (LIAAYLLLPLGFVILLSGIFW). Residues 112–147 (CPAEREASGIPPPLYTETGLEFQDGNDSHPEAPPSY) are disordered.

It localises to the membrane. The protein is Transmembrane protein 252 (TMEM252) of Homo sapiens (Human).